A 120-amino-acid polypeptide reads, in one-letter code: UPF0231 protein NT01EI_0766 (120 aa).

Belongs to the UPF0231 family.

The chain is UPF0231 protein NT01EI_0766 from Edwardsiella ictaluri (strain 93-146).